Consider the following 544-residue polypeptide: Serine/threonine-protein kinase bur1 (544 aa).

A Protein kinase domain is found at 25-326; it reads FEFLGKLGEG…AIDALKHPYF (302 aa). ATP-binding positions include 31–39 and Lys54; that span reads LGEGTFGEV. Asp155 acts as the Proton acceptor in catalysis. A disordered region spans residues 357–544; it reads AAMPPAPAGG…ERVDRGPYRR (188 aa). The span at 374 to 403 shows a compositional bias: polar residues; the sequence is GGWSTNSGSRTGAETRNPRISSAARSQGNQ. Basic and acidic residues-rich tracts occupy residues 419-438, 456-466, 488-511, and 532-544; these read RGNE…HRDG, HSDKTGRDRGY, DRNR…DKSH, and NYRE…PYRR.

This sequence belongs to the protein kinase superfamily. CMGC Ser/Thr protein kinase family. CDC2/CDKX subfamily.

Its subcellular location is the nucleus. It catalyses the reaction L-seryl-[protein] + ATP = O-phospho-L-seryl-[protein] + ADP + H(+). The catalysed reaction is L-threonyl-[protein] + ATP = O-phospho-L-threonyl-[protein] + ADP + H(+). The enzyme catalyses [DNA-directed RNA polymerase] + ATP = phospho-[DNA-directed RNA polymerase] + ADP + H(+). Functionally, serine/threonine-protein kinase involved in transcription regulation. Phosphorylates the UBC2/RAD6 ubiquitin-conjugating enzyme (E2), leading to monoubiquitination of histone H2B and the silencing of telomeric-associated genes. Also required for histone H3 methylation. Necessary for the recovery from pheromone-induced growth arrest in the cell cycle G1 phase. This chain is Serine/threonine-protein kinase bur1 (ptkA), found in Emericella nidulans (strain FGSC A4 / ATCC 38163 / CBS 112.46 / NRRL 194 / M139) (Aspergillus nidulans).